A 307-amino-acid polypeptide reads, in one-letter code: Putative F-box/LRR-repeat protein 22 (307 aa).

A compositionally biased stretch (polar residues) spans 1–15 (MVTSSSSPPLATSQL). A disordered region spans residues 1–26 (MVTSSSSPPLATSQLPVMKGEEKPSN). In terms of domain architecture, F-box spans 24 to 71 (PSNWAELPPDLLSSILLRLSPLEILENARKVCRSWRRVSKDPLIWRRI). LRR repeat units lie at residues 108 to 133 (WRFQTTSLLNYMAERSSNLRRLRVKG), 158 to 183 (YCSIEEEHFKTIGQACPNLKTLKLVG), 185 to 210 (WSHLNESDNDALAIADTMPGLLHLQL), 212 to 237 (SNGLTNIGLNAILDGCPHLECLDLRQ), and 244 to 270 (FGDLERQCLERIKDFRCPNDVLDDYNY). Over residues 279-289 (IEDEKGEEEEN) the composition is skewed to acidic residues. Residues 279-307 (IEDEKGEEEENYSYGSDDTEYGYRRSADF) are disordered.

In Arabidopsis thaliana (Mouse-ear cress), this protein is Putative F-box/LRR-repeat protein 22 (FBL22).